We begin with the raw amino-acid sequence, 350 residues long: Phosphotriesterase-related protein (350 aa).

A divalent metal cation-binding residues include histidine 22, histidine 24, glutamate 169, histidine 201, histidine 230, and aspartate 298.

This sequence belongs to the metallo-dependent hydrolases superfamily. Phosphotriesterase family. A divalent metal cation serves as cofactor.

The sequence is that of Phosphotriesterase-related protein from Drosophila sechellia (Fruit fly).